A 565-amino-acid polypeptide reads, in one-letter code: Sensor histidine kinase MtrB (565 aa).

Residues 1-13 (MMWGSRRRTRSRW) are compositionally biased toward basic residues. The segment at 1-21 (MMWGSRRRTRSRWGRSGPMTR) is disordered. A run of 2 helical transmembrane segments spans residues 42 to 62 (VVALTLGLSLAVILALGFVLT) and 213 to 233 (GTMITGGAVLLVLLAGIALLV). One can recognise an HAMP domain in the interval 235–287 (RQVVVPVRSASRIAERFAEGHLSERMPVRGEDDMARLAMSFNDMAESLSRQIT). The Histidine kinase domain occupies 302-519 (DVSHELRTPL…CFRLTLPLVR (218 aa)). H305 bears the Phosphohistidine; by autocatalysis mark. A disordered region spans residues 524-565 (TTSPLPMKPIPQPSPSGGQSPSTGPQHAKDRARQREHAERSL). Positions 538 to 549 (PSGGQSPSTGPQ) are enriched in low complexity. The segment covering 550 to 565 (HAKDRARQREHAERSL) has biased composition (basic and acidic residues).

The protein resides in the cell membrane. The catalysed reaction is ATP + protein L-histidine = ADP + protein N-phospho-L-histidine.. In terms of biological role, member of the two-component regulatory system MtrA/MtrB. Seems to function as a membrane-associated protein kinase that phosphorylates MtrA in response to environmental signals. This is Sensor histidine kinase MtrB (mtrB) from Mycolicibacterium paratuberculosis (strain ATCC BAA-968 / K-10) (Mycobacterium paratuberculosis).